We begin with the raw amino-acid sequence, 369 residues long: Phospho-N-acetylmuramoyl-pentapeptide-transferase (369 aa).

Transmembrane regions (helical) follow at residues 13-33 (ISGIGLASSLAAGLGIAALTL), 49-69 (LPLLLCTIASAIAGYFVVPLL), 95-115 (MGGIFFIPVAVVGACVLSNFA), 119-139 (LAVSALTLSYGLIGWIDDWQI), 154-174 (LALQIGFAAAFCLWLMFNQPA), 183-203 (WVSFALPLGFLFWPLAGFVLV), 215-235 (IDGLAGGTVAIALLALGAIVA), 237-257 (TSPALMVFCAALSGSCLGFLA), 281-301 (AVALLTNSLVALFILSGIFFV), and 346-366 (VVSSFYVIAAILAAICLAIAS).

Belongs to the glycosyltransferase 4 family. MraY subfamily. The cofactor is Mg(2+).

It localises to the cell inner membrane. It carries out the reaction UDP-N-acetyl-alpha-D-muramoyl-L-alanyl-gamma-D-glutamyl-meso-2,6-diaminopimeloyl-D-alanyl-D-alanine + di-trans,octa-cis-undecaprenyl phosphate = di-trans,octa-cis-undecaprenyl diphospho-N-acetyl-alpha-D-muramoyl-L-alanyl-D-glutamyl-meso-2,6-diaminopimeloyl-D-alanyl-D-alanine + UMP. It participates in cell wall biogenesis; peptidoglycan biosynthesis. Its function is as follows. Catalyzes the initial step of the lipid cycle reactions in the biosynthesis of the cell wall peptidoglycan: transfers peptidoglycan precursor phospho-MurNAc-pentapeptide from UDP-MurNAc-pentapeptide onto the lipid carrier undecaprenyl phosphate, yielding undecaprenyl-pyrophosphoryl-MurNAc-pentapeptide, known as lipid I. This chain is Phospho-N-acetylmuramoyl-pentapeptide-transferase, found in Nostoc sp. (strain PCC 7120 / SAG 25.82 / UTEX 2576).